Reading from the N-terminus, the 573-residue chain is Sterol esterase 1 (573 aa).

Over 1-12 (MGVSAVLKRARN) the chain is Cytoplasmic. Residues 13-33 (LLATFIVCCFMAVVLVLALAH) lie within the membrane without spanning it. The Cytoplasmic segment spans residues 34-573 (HFINEHRDTR…TELEMVAEKA (540 aa)). Ser-315 acts as the Nucleophile in catalysis. Active-site charge relay system residues include Asp-489 and His-520.

It belongs to the AB hydrolase superfamily. In terms of processing, not N-glycosylated.

The protein localises to the lipid droplet. The protein resides in the membrane. The catalysed reaction is a sterol ester + H2O = a sterol + a fatty acid + H(+). Its function is as follows. Mediates the hydrolysis of steryl esters, thereby playing a central role in lipid metabolism. Under heme-deficient conditions, it constitutes the major steryl ester hydrolase, suggesting that it plays a central role in mobilization of steryl esters under anaerobic conditions. The chain is Sterol esterase 1 (YEH1) from Saccharomyces cerevisiae (strain ATCC 204508 / S288c) (Baker's yeast).